We begin with the raw amino-acid sequence, 299 residues long: Protease HtpX homolog (299 aa).

A run of 2 helical transmembrane segments spans residues 15 to 35 (ILLL…GYLF) and 39 to 59 (GLGG…SMIF). A Zn(2+)-binding site is contributed by His-143. Glu-144 is an active-site residue. His-147 contributes to the Zn(2+) binding site. The next 2 membrane-spanning stretches (helical) occupy residues 158 to 178 (IAVA…RMMW) and 198 to 218 (IIML…ATLV). Glu-227 serves as a coordination point for Zn(2+).

This sequence belongs to the peptidase M48B family. The cofactor is Zn(2+).

The protein localises to the cell membrane. The sequence is that of Protease HtpX homolog from Streptococcus pneumoniae (strain Taiwan19F-14).